A 498-amino-acid polypeptide reads, in one-letter code: ATP synthase subunit beta, chloroplastic (498 aa).

172 to 179 (GGAGVGKT) provides a ligand contact to ATP.

Belongs to the ATPase alpha/beta chains family. F-type ATPases have 2 components, CF(1) - the catalytic core - and CF(0) - the membrane proton channel. CF(1) has five subunits: alpha(3), beta(3), gamma(1), delta(1), epsilon(1). CF(0) has four main subunits: a(1), b(1), b'(1) and c(9-12).

It is found in the plastid. Its subcellular location is the chloroplast thylakoid membrane. It carries out the reaction ATP + H2O + 4 H(+)(in) = ADP + phosphate + 5 H(+)(out). In terms of biological role, produces ATP from ADP in the presence of a proton gradient across the membrane. The catalytic sites are hosted primarily by the beta subunits. The polypeptide is ATP synthase subunit beta, chloroplastic (Helianthus annuus (Common sunflower)).